Here is a 275-residue protein sequence, read N- to C-terminus: MQIKTITLKLSAVSLGALFFSGCLGTSFFSSLDNAQVYYPSNDFKSSPSSSGTKGTMKPYTINGKTYYPTVVAVGETADGIASWYGPGFHGKKTSNGETYNQNALTAAHKTLPMNTILKVTNLNNNRQVTVRVNDRGPFVNNRIIDLSKGAASQIDMIASGTAPVRLEVIGFGSSNSGNNIVHSNVNYGNSGEIANNGQIYEGGNFMVQIGAFKNPAGAQTIAARYKTYRTYSSTIRTSSVDGLNRVFLTGFRSEDEARDFAASGAFAGAFVVRE.

A signal peptide spans 1–22; that stretch reads MQIKTITLKLSAVSLGALFFSG. Cys-23 carries the N-palmitoyl cysteine lipid modification. Residue Cys-23 is the site of S-diacylglycerol cysteine attachment. The SPOR domain maps to 200-275; that stretch reads IYEGGNFMVQ…AFAGAFVVRE (76 aa).

The protein belongs to the RlpA family.

The protein localises to the cell membrane. Functionally, lytic transglycosylase with a strong preference for naked glycan strands that lack stem peptides. The protein is Endolytic peptidoglycan transglycosylase RlpA of Campylobacter jejuni subsp. jejuni serotype O:2 (strain ATCC 700819 / NCTC 11168).